The chain runs to 500 residues: Prostacyclin synthase (500 aa).

A helical transmembrane segment spans residues 1-20 (MSWAVVFGLLAALLLLLLLT). Residues arginine 106, leucine 112, asparagine 287, 358 to 359 (TR), and arginine 382 contribute to the substrate site. Cysteine 441 serves as a coordination point for heme.

The protein belongs to the cytochrome P450 family. Heme serves as cofactor.

Its subcellular location is the endoplasmic reticulum membrane. It catalyses the reaction prostaglandin H2 = prostaglandin I2. It carries out the reaction a hydroperoxyeicosatetraenoate = an oxoeicosatetraenoate + H2O. The enzyme catalyses (15S)-hydroperoxy-(5Z,8Z,11Z,13E)-eicosatetraenoate = 15-oxo-(5Z,8Z,11Z,13E)-eicosatetraenoate + H2O. The catalysed reaction is (15S)-hydroperoxy-(5Z,8Z,11Z,13E)-eicosatetraenoate + AH2 = (15S)-hydroxy-(5Z,8Z,11Z,13E)-eicosatetraenoate + A + H2O. Its function is as follows. Catalyzes the biosynthesis and metabolism of eicosanoids. Catalyzes the isomerization of prostaglandin H2 to prostacyclin (= prostaglandin I2), a potent mediator of vasodilation and inhibitor of platelet aggregation. Additionally, displays dehydratase activity, toward hydroperoxyeicosatetraenoates (HPETEs), especially toward (15S)-hydroperoxy-(5Z,8Z,11Z,13E)-eicosatetraenoate (15(S)-HPETE). In Bos taurus (Bovine), this protein is Prostacyclin synthase (PTGIS).